The sequence spans 188 residues: Elongation factor P (188 aa).

Lysine 34 carries the post-translational modification N6-(3,6-diaminohexanoyl)-5-hydroxylysine.

Belongs to the elongation factor P family. May be beta-lysylated on the epsilon-amino group of Lys-34 by the combined action of EpmA and EpmB, and then hydroxylated on the C5 position of the same residue by EpmC (if this protein is present). Lysylation is critical for the stimulatory effect of EF-P on peptide-bond formation. The lysylation moiety may extend toward the peptidyltransferase center and stabilize the terminal 3-CCA end of the tRNA. Hydroxylation of the C5 position on Lys-34 may allow additional potential stabilizing hydrogen-bond interactions with the P-tRNA.

It localises to the cytoplasm. The protein operates within protein biosynthesis; polypeptide chain elongation. Involved in peptide bond synthesis. Alleviates ribosome stalling that occurs when 3 or more consecutive Pro residues or the sequence PPG is present in a protein, possibly by augmenting the peptidyl transferase activity of the ribosome. Modification of Lys-34 is required for alleviation. This Vibrio campbellii (strain ATCC BAA-1116) protein is Elongation factor P.